We begin with the raw amino-acid sequence, 385 residues long: Rhomboid domain-containing protein 3 (385 aa).

Helical transmembrane passes span 13–33 (ALPL…LLGA), 58–78 (LGHT…TLGW), 93–113 (SAVL…LGLS), 146–166 (WLLP…PPFL), and 168–188 (LLCG…WLEL). The UBA domain occupies 322-361 (SVSSLRLQQLQHMGFPTEQAAVALAATGRVEGAVSLLVEG).

The protein localises to the membrane. The sequence is that of Rhomboid domain-containing protein 3 (Rhbdd3) from Rattus norvegicus (Rat).